A 289-amino-acid polypeptide reads, in one-letter code: Glucosamine-6-phosphate deaminase 1 (289 aa).

Residue K64 is modified to N6-acetyllysine. D72 acts as the Proton acceptor; for enolization step in catalysis. Catalysis depends on D141, which acts as the For ring-opening step. H143 acts as the Proton acceptor; for ring-opening step in catalysis. The active-site For ring-opening step is the E148. T161 is subject to Phosphothreonine.

This sequence belongs to the glucosamine/galactosamine-6-phosphate isomerase family. In terms of assembly, homohexamer. In terms of tissue distribution, at the equatorial segment of the sperm head.

The protein localises to the cytoplasm. It carries out the reaction alpha-D-glucosamine 6-phosphate + H2O = beta-D-fructose 6-phosphate + NH4(+). The protein operates within nucleotide-sugar biosynthesis; UDP-N-acetyl-alpha-D-glucosamine biosynthesis; alpha-D-glucosamine 6-phosphate from D-fructose 6-phosphate: step 1/1. Allosterically activated by N-acetylglucosamine-6-phosphate (GlcNAc6P). Its function is as follows. Catalyzes the reversible conversion of alpha-D-glucosamine 6-phosphate (GlcN-6P) into beta-D-fructose 6-phosphate (Fru-6P) and ammonium ion, a regulatory reaction step in de novo uridine diphosphate-N-acetyl-alpha-D-glucosamine (UDP-GlcNAc) biosynthesis via hexosamine pathway. Deamination is coupled to aldo-keto isomerization mediating the metabolic flux from UDP-GlcNAc toward Fru-6P. At high ammonium level can drive amination and isomerization of Fru-6P toward hexosamines and UDP-GlcNAc synthesis. Has a role in fine tuning the metabolic fluctuations of cytosolic UDP-GlcNAc and their effects on hyaluronan synthesis that occur during tissue remodeling. Seems to trigger calcium oscillations in mammalian eggs. These oscillations serve as the essential trigger for egg activation and early development of the embryo. The polypeptide is Glucosamine-6-phosphate deaminase 1 (Mesocricetus auratus (Golden hamster)).